We begin with the raw amino-acid sequence, 149 residues long: Ribonuclease H (149 aa).

Residues 1-143 (MNQVVIYTDG…ADALANKGVD (143 aa)) form the RNase H type-1 domain. Mg(2+)-binding residues include Asp9, Glu47, Asp69, and Asp135.

This sequence belongs to the RNase H family. In terms of assembly, monomer. The cofactor is Mg(2+).

It localises to the cytoplasm. The enzyme catalyses Endonucleolytic cleavage to 5'-phosphomonoester.. In terms of biological role, endonuclease that specifically degrades the RNA of RNA-DNA hybrids. The polypeptide is Ribonuclease H (Paracidovorax citrulli (strain AAC00-1) (Acidovorax citrulli)).